The primary structure comprises 653 residues: Asparagine--tRNA ligase, cytoplasmic (653 aa).

The protein belongs to the class-II aminoacyl-tRNA synthetase family.

It localises to the cytoplasm. It carries out the reaction tRNA(Asn) + L-asparagine + ATP = L-asparaginyl-tRNA(Asn) + AMP + diphosphate + H(+). This is Asparagine--tRNA ligase, cytoplasmic (asnS1) from Dictyostelium discoideum (Social amoeba).